The primary structure comprises 169 residues: Sorting nexin-24 (169 aa).

M1 bears the N-acetylmethionine mark. One can recognise a PX domain in the interval 1-125; it reads MEVYIPSFRY…SFDETESEES (125 aa). 4 residues coordinate a 1,2-diacyl-sn-glycero-3-phospho-(1D-myo-inositol-3-phosphate): R38, S40, K61, and R74. 2 positions are modified to phosphoserine: S113 and S116.

Belongs to the sorting nexin family.

It localises to the cytoplasmic vesicle membrane. In terms of biological role, may be involved in several stages of intracellular trafficking. In Homo sapiens (Human), this protein is Sorting nexin-24 (SNX24).